The chain runs to 76 residues: UPF0235 protein MRA_1997 (76 aa).

This sequence belongs to the UPF0235 family.

The sequence is that of UPF0235 protein MRA_1997 from Mycobacterium tuberculosis (strain ATCC 25177 / H37Ra).